The primary structure comprises 699 residues: Elongation factor G (699 aa).

In terms of domain architecture, tr-type G spans 8–290 (NRYRNIGICA…AVIEFLPAPD (283 aa)). Residues 17 to 24 (AHVDAGKT), 88 to 92 (DTPGH), and 142 to 145 (NKMD) each bind GTP.

It belongs to the TRAFAC class translation factor GTPase superfamily. Classic translation factor GTPase family. EF-G/EF-2 subfamily.

The protein localises to the cytoplasm. In terms of biological role, catalyzes the GTP-dependent ribosomal translocation step during translation elongation. During this step, the ribosome changes from the pre-translocational (PRE) to the post-translocational (POST) state as the newly formed A-site-bound peptidyl-tRNA and P-site-bound deacylated tRNA move to the P and E sites, respectively. Catalyzes the coordinated movement of the two tRNA molecules, the mRNA and conformational changes in the ribosome. This is Elongation factor G from Alcanivorax borkumensis (strain ATCC 700651 / DSM 11573 / NCIMB 13689 / SK2).